The primary structure comprises 488 residues: Germacrene A hydroxylase (488 aa).

Residues 1 to 6 (MELSFT) lie on the Cytoplasmic side of the membrane. A helical; Signal-anchor for type II membrane protein membrane pass occupies residues 7 to 23 (TSIAVATIVFVLFKLAT). The Lumenal segment spans residues 24 to 488 (RPKSNKKLLP…KTHLVLVPSF (465 aa)). N-linked (GlcNAc...) asparagine glycosylation is found at N255, N260, and N379. Residue C432 coordinates heme.

The protein belongs to the cytochrome P450 family. Requires heme as cofactor.

The protein resides in the endoplasmic reticulum membrane. The enzyme catalyses (+)-(R)-germacrene A + 3 reduced [NADPH--hemoprotein reductase] + 3 O2 = germacra-1(10),4,11(13)-trien-12-oate + 3 oxidized [NADPH--hemoprotein reductase] + 4 H2O + 4 H(+). The protein operates within secondary metabolite biosynthesis; terpenoid biosynthesis. In terms of biological role, involved in the biosynthesis of germacrene-derived sesquiterpene lactones. Catalyzes three consecutive oxidations of germacrene A to produce germacrene A acid. Could also catalyze the three-step oxidation of non-natural substrate amorphadiene to artemisinic acid. The chain is Germacrene A hydroxylase from Saussurea costus (Costus).